We begin with the raw amino-acid sequence, 474 residues long: Type I restriction enzyme EcoBI specificity subunit (474 aa).

Belongs to the type-I restriction system S methylase family. In terms of assembly, the type I restriction/modification system is composed of three polypeptides R, M and S. The restriction enzyme has stoichiometry R(2)M(2)S(1) while the methyltransferase is M(2)S(1).

Functionally, the specificity (S) subunit of a type I restriction enzyme; this subunit dictates DNA sequence specificity. The M and S subunits together form a methyltransferase (MTase) that methylates A-3 on the top strand and A-4 on the bottom strand of the sequence 5'-TGAN(8)TGCT-3'. In the presence of the R subunit the complex can also act as an endonuclease, binding to the same target sequence but cutting the DNA some distance from this site. Whether the DNA is cut or modified depends on the methylation state of the target sequence. When the target site is unmodified, the DNA is cut. When the target site is hemimethylated, the complex acts as a maintenance MTase modifying the DNA so that both strands become methylated. After locating a non-methylated recognition site, the enzyme complex serves as a molecular motor that translocates DNA in an ATP-dependent manner until a collision occurs that triggers cleavage. This is Type I restriction enzyme EcoBI specificity subunit from Escherichia coli.